Consider the following 247-residue polypeptide: Cell division protein ZapD (247 aa).

Belongs to the ZapD family. In terms of assembly, interacts with FtsZ.

The protein localises to the cytoplasm. Its function is as follows. Cell division factor that enhances FtsZ-ring assembly. Directly interacts with FtsZ and promotes bundling of FtsZ protofilaments, with a reduction in FtsZ GTPase activity. In Salmonella choleraesuis (strain SC-B67), this protein is Cell division protein ZapD.